The sequence spans 221 residues: GTP cyclohydrolase III (221 aa).

It belongs to the archaeal-type GTP cyclohydrolase family.

The enzyme catalyses GTP + 3 H2O = 2-amino-5-formylamino-6-(5-phospho-D-ribosylamino)pyrimidin-4(3H)-one + 2 phosphate + 2 H(+). In terms of biological role, catalyzes the formation of 2-amino-5-formylamino-6-ribofuranosylamino-4(3H)-pyrimidinone ribonucleotide monophosphate and inorganic phosphate from GTP. Also has an independent pyrophosphate phosphohydrolase activity. This is GTP cyclohydrolase III from Pyrobaculum islandicum (strain DSM 4184 / JCM 9189 / GEO3).